The primary structure comprises 405 residues: S-arrestin (405 aa).

T234 carries the post-translational modification Phosphothreonine.

Belongs to the arrestin family. Monomer. Homodimer. Homotetramer. Interacts with RHO (via the phosphorylated C-terminus). As to expression, detected in retina, in the proximal portion of the outer segment of rod photoreceptor cells (at protein level).

The protein localises to the cell projection. It is found in the cilium. The protein resides in the photoreceptor outer segment. It localises to the membrane. Functionally, binds to photoactivated, phosphorylated RHO and terminates RHO signaling via G-proteins by competing with G-proteins for the same binding site on RHO. May play a role in preventing light-dependent degeneration of retinal photoreceptor cells. In Homo sapiens (Human), this protein is S-arrestin (SAG).